We begin with the raw amino-acid sequence, 373 residues long: Probable cysteine protease RD19C (373 aa).

The signal sequence occupies residues 1–20; it reads MDRVVFFFLIAATLLAGSLG. Residues 21–139 constitute a propeptide, activation peptide; sequence STVISGEVTD…QTAPILPTSD (119 aa). Cystine bridges form between C161/C211 and C195/C245. Residue C164 is part of the active site. Residue N258 is glycosylated (N-linked (GlcNAc...) asparagine). C301 and C356 are disulfide-bonded. Catalysis depends on residues H307 and N334.

It belongs to the peptidase C1 family.

The protein localises to the lytic vacuole. Probable thiol protease. The chain is Probable cysteine protease RD19C from Arabidopsis thaliana (Mouse-ear cress).